Here is a 729-residue protein sequence, read N- to C-terminus: Phosphoribosylformylglycinamidine synthase subunit PurL (729 aa).

His54 is an active-site residue. ATP is bound by residues Tyr57 and Lys96. Glu98 is a binding site for Mg(2+). Substrate contacts are provided by residues Ser99–His102 and Arg121. The Proton acceptor role is filled by His100. Asp122 provides a ligand contact to Mg(2+). A substrate-binding site is contributed by Gln245. Asp273 lines the Mg(2+) pocket. Substrate is bound at residue Glu317–Gln319. 2 residues coordinate ATP: Asp495 and Gly532. Asn533 is a Mg(2+) binding site. Ser535 provides a ligand contact to substrate.

It belongs to the FGAMS family. As to quaternary structure, monomer. Part of the FGAM synthase complex composed of 1 PurL, 1 PurQ and 2 PurS subunits.

It localises to the cytoplasm. The enzyme catalyses N(2)-formyl-N(1)-(5-phospho-beta-D-ribosyl)glycinamide + L-glutamine + ATP + H2O = 2-formamido-N(1)-(5-O-phospho-beta-D-ribosyl)acetamidine + L-glutamate + ADP + phosphate + H(+). It functions in the pathway purine metabolism; IMP biosynthesis via de novo pathway; 5-amino-1-(5-phospho-D-ribosyl)imidazole from N(2)-formyl-N(1)-(5-phospho-D-ribosyl)glycinamide: step 1/2. Functionally, part of the phosphoribosylformylglycinamidine synthase complex involved in the purines biosynthetic pathway. Catalyzes the ATP-dependent conversion of formylglycinamide ribonucleotide (FGAR) and glutamine to yield formylglycinamidine ribonucleotide (FGAM) and glutamate. The FGAM synthase complex is composed of three subunits. PurQ produces an ammonia molecule by converting glutamine to glutamate. PurL transfers the ammonia molecule to FGAR to form FGAM in an ATP-dependent manner. PurS interacts with PurQ and PurL and is thought to assist in the transfer of the ammonia molecule from PurQ to PurL. The chain is Phosphoribosylformylglycinamidine synthase subunit PurL from Staphylococcus epidermidis (strain ATCC 12228 / FDA PCI 1200).